A 179-amino-acid polypeptide reads, in one-letter code: Replication restart protein DnaT (179 aa).

Residues 1-83 (MSSRILTSHF…FEEPAAAPVA (83 aa)) form a required for trimerization and to bind PriB region. Residues 84–179 (VPMGKFAMYA…DSHIPRGFRG (96 aa)) are binds ssDNA. The interval 151–179 (SRASNGGQPKRDVNSVSEPDSHIPRGFRG) is disordered. The segment covering 159-173 (PKRDVNSVSEPDSHI) has biased composition (basic and acidic residues).

The protein belongs to the DnaT family. In terms of assembly, homotrimer. Interacts with PriB. Interacts with PriC. Component of the replication restart primosome. Primosome assembly occurs via a 'hand-off' mechanism. PriA binds to replication forks, subsequently PriB then DnaT bind; DnaT then displaces ssDNA to generate the helicase loading substrate.

In terms of biological role, involved in the restart of stalled replication forks, which reloads the replicative helicase on sites other than the origin of replication. Can function in multiple replication restart pathways. Displaces ssDNA from a PriB-ssDNA complex. Probably forms a spiral filament on ssDNA. Functionally, binds single-stranded (ss)DNA. The minimal binding site is about 26 +/- 2 nucleotides (nt) per trimer. Two DNA-protein complexes are seen with 55 nt-long ssDNA. This chain is Replication restart protein DnaT, found in Klebsiella pneumoniae subsp. pneumoniae (strain ATCC 700721 / MGH 78578).